The chain runs to 194 residues: Large ribosomal subunit protein uL6m (194 aa).

This sequence belongs to the universal ribosomal protein uL6 family.

It is found in the mitochondrion. The chain is Large ribosomal subunit protein uL6m (RPL6) from Prototheca wickerhamii.